The following is a 225-amino-acid chain: tRNA 2'-phosphotransferase 1 (225 aa).

The interval 1–21 is disordered; the sequence is MDCETRGRGRRGRGNRNEESR.

Belongs to the KptA/TPT1 family.

It carries out the reaction 2'-phospho-[ligated tRNA] + NAD(+) = mature tRNA + ADP-alpha-D-ribose 1'',2''-cyclic phosphate + nicotinamide. Functionally, catalyzes the last step of tRNA splicing, the transfer of the splice junction 2'-phosphate from ligated tRNA to NAD to produce ADP-ribose 1''-2'' cyclic phosphate. This Danio rerio (Zebrafish) protein is tRNA 2'-phosphotransferase 1 (trpt1).